Here is a 460-residue protein sequence, read N- to C-terminus: DNA repair protein RadA (460 aa).

The segment at 11-28 (CNECGADYPRWQGQCSAC) adopts a C4-type zinc-finger fold. 102–109 (GNPGAGKS) is a binding site for ATP. The short motif at 258–262 (KNRFG) is the RadA KNRFG motif element. Positions 357 to 460 (DVFVNVVGGV…SDALSVFDDL (104 aa)) are lon-protease-like.

The protein belongs to the RecA family. RadA subfamily.

DNA-dependent ATPase involved in processing of recombination intermediates, plays a role in repairing DNA breaks. Stimulates the branch migration of RecA-mediated strand transfer reactions, allowing the 3' invading strand to extend heteroduplex DNA faster. Binds ssDNA in the presence of ADP but not other nucleotides, has ATPase activity that is stimulated by ssDNA and various branched DNA structures, but inhibited by SSB. Does not have RecA's homology-searching function. Genetic experiments involving combination of radA mutations with mutations in recA, recB, recG, recJ, recQ, ruvA and ruvC show it plays a role in recombination and recombinational repair, probably involving stabilizing or processing branched DNA or blocked replication forks. Is genetically synergistic to RecG and RuvABC. May be involved in recovery of genetic rearrangements during replication fork breakdown. In combination with RadD is important in recovery from double-strand DNA breaks (DSB). The chain is DNA repair protein RadA from Escherichia coli (strain K12).